The primary structure comprises 153 residues: Small ribosomal subunit protein bS6 (153 aa).

The disordered stretch occupies residues 94–153; the sequence is EAHEEGPSAMMQKRDRDDRPRRDGDRPDRGDRGDRGDRGPREGGRESFGDRPRRPREDRA.

Belongs to the bacterial ribosomal protein bS6 family.

Functionally, binds together with bS18 to 16S ribosomal RNA. This is Small ribosomal subunit protein bS6 from Allorhizobium ampelinum (strain ATCC BAA-846 / DSM 112012 / S4) (Agrobacterium vitis (strain S4)).